Here is a 555-residue protein sequence, read N- to C-terminus: 5'-nucleotidase-related protein (555 aa).

The N-terminal stretch at Met-1–Gly-25 is a signal peptide. A divalent metal cation-binding residues include Asp-38, His-40, and Asp-91. N-linked (GlcNAc...) asparagine glycosylation is present at Asn-105. Asn-123 lines the a divalent metal cation pocket. Asn-198 is a glycosylation site (N-linked (GlcNAc...) asparagine). Positions 225 and 249 each coordinate a divalent metal cation. Asn-295 carries an N-linked (GlcNAc...) asparagine glycan. Residues Arg-358, Arg-402, and Phe-421 each contribute to the AMP site. An N-linked (GlcNAc...) asparagine glycan is attached at Asn-465. Phe-505 and Asp-511 together coordinate AMP.

The protein belongs to the 5'-nucleotidase family. Requires Mg(2+) as cofactor. Mn(2+) is required as a cofactor. As to expression, salivary gland (at protein level). Saliva (at protein level).

It is found in the secreted. It catalyses the reaction a ribonucleoside 5'-triphosphate + 2 H2O = a ribonucleoside 5'-phosphate + 2 phosphate + 2 H(+). Its activity is regulated as follows. DEPC (2 mM), sodium fluoride (10 mM) and 4,4'-Diisothiocyano-2,2'-stilbenedisulfonic acid (DIDS, 100 uM) nearly completely abrogate activity. Concanavalin A enhances activity. Its function is as follows. Facilitates hematophagy by inhibiting ADP-dependent platelet aggregation and promoting disaggregation of ADP-stimulated platelets in the host. Cleaves adenosine triphosphate (ATP) and adenosine diphosphate (ADP) to adenosine monophosphate (AMP) and inorganic phosphate. Interacts with fibrinogen receptor integrin alpha-IIb/beta-3 (ITGA2B/ITGB3). In Glossina morsitans morsitans (Savannah tsetse fly), this protein is 5'-nucleotidase-related protein.